The chain runs to 415 residues: uncharacterized protein (415 aa).

[4Fe-4S] cluster contacts are provided by Cys-66, Cys-72, Cys-75, and Cys-149. Positions 249, 276, 296, and 344 each coordinate S-adenosyl-L-methionine. Residue Cys-370 is the Nucleophile of the active site.

Belongs to the class I-like SAM-binding methyltransferase superfamily. RNA M5U methyltransferase family.

This is an uncharacterized protein from Brucella suis biovar 1 (strain 1330).